Reading from the N-terminus, the 469-residue chain is Alpha-galactosidase (469 aa).

Positions 1-17 (MFPFFFALFFSSTDVLA) are cleaved as a signal peptide. Cys-41 and Cys-73 are oxidised to a cystine. Residues Asp-71 and Asp-72 each coordinate substrate. Asn-81 carries N-linked (GlcNAc...) asparagine glycosylation. The cysteines at positions 120 and 150 are disulfide-linked. Lys-146 contacts substrate. The active-site Nucleophile is the Asp-148. Asn-174 carries an N-linked (GlcNAc...) asparagine glycan. Residue Arg-204 participates in substrate binding. The Proton donor role is filled by Asp-208. 2 cysteine pairs are disulfide-bonded: Cys-220–Cys-236 and Cys-222–Cys-229. Gln-250 lines the substrate pocket. Residues Asn-269, Asn-369, Asn-402, Asn-412, Asn-421, Asn-426, and Asn-434 are each glycosylated (N-linked (GlcNAc...) asparagine).

Belongs to the glycosyl hydrolase 27 family. In terms of assembly, homotetramer.

The protein localises to the secreted. The enzyme catalyses Hydrolysis of terminal, non-reducing alpha-D-galactose residues in alpha-D-galactosides, including galactose oligosaccharides, galactomannans and galactolipids.. The chain is Alpha-galactosidase (MEL) from Lachancea cidri (Yeast).